Consider the following 291-residue polypeptide: Putative fatty acid elongase 4 (291 aa).

3 helical membrane-spanning segments follow: residues 46-66, 79-99, and 254-274; these read ILFQ…FILI, FTLK…SIIA, and NLYL…QFFV.

Belongs to the ELO family.

Its subcellular location is the membrane. The catalysed reaction is a very-long-chain acyl-CoA + malonyl-CoA + H(+) = a very-long-chain 3-oxoacyl-CoA + CO2 + CoA. Its pathway is lipid metabolism; fatty acid biosynthesis. Functionally, could be implicated in synthesis of very long chain fatty acids. This Caenorhabditis elegans protein is Putative fatty acid elongase 4 (elo-4).